The chain runs to 145 residues: MNQTVYLYTDGACKGNPGAGGWGVLMRYGSHEKELFGGEAQTTNNRMELTAVIEGLKSLKRRCTVIICTDSQYVKNGMENWIHGWKRNGWKTAAKQPVKNDDLWKELDALVGRHQVSWTWVKGHAGHAENERADDLANRGAAQFS.

Residues 1 to 142 (MNQTVYLYTD…ADDLANRGAA (142 aa)) enclose the RNase H type-1 domain. Residues Asp10, Glu48, Asp70, and Asp134 each contribute to the Mg(2+) site.

Belongs to the RNase H family. As to quaternary structure, monomer. Requires Mg(2+) as cofactor.

It localises to the cytoplasm. It carries out the reaction Endonucleolytic cleavage to 5'-phosphomonoester.. Endonuclease that specifically degrades the RNA of RNA-DNA hybrids. This is Ribonuclease HI from Neisseria meningitidis serogroup A / serotype 4A (strain DSM 15465 / Z2491).